The following is a 174-amino-acid chain: I-Kappa-B like protein C1 (174 aa).

2 ANK repeats span residues 56-88 (RGRQCIHMVALYDRKNAIMKIEILVNMGADINA) and 93-123 (TGNSLLHIAVKTKNYELAEWLCREPTVNLGA).

This sequence belongs to the polydnaviridae I-Kappa-B-like protein family.

Functionally, suppresses the host immune response through NF-kappa-B inactivation. Possesses ankyrin repeat domains required for NF-kappa-B binding but lacks the regulatory regions required for dissociation from NF-kappa-B and degradation. Therefore, prevents host NF-kappa-B release and subsequent activation. This Microplitis demolitor bracovirus (isolate Webb) (MdBV) protein is I-Kappa-B like protein C1 (C1).